A 963-amino-acid polypeptide reads, in one-letter code: Low-density lipoprotein receptor-related protein 8 (963 aa).

The signal sequence occupies residues 1–32; it reads MGLPEPGPLRLLALLLLLLLLLLLQLQHLAAA. Residues 42 to 826 are Extracellular-facing; it reads GPAKDCEKDQ…SKMGSTVTAA (785 aa). LDL-receptor class A domains lie at 46–82, 85–123, 126–164, 166–202, 205–246, 258–295, and 298–334; these read DCEK…DDCP, TCAD…ATCT, VCPA…AGCA, LCAP…RGCA, ACGP…ELCG, ACAT…ADCP, and TCRG…AGCL. Disulfide bonds link cysteine 47–cysteine 59, cysteine 54–cysteine 72, cysteine 66–cysteine 81, cysteine 86–cysteine 98, cysteine 93–cysteine 111, cysteine 105–cysteine 122, cysteine 127–cysteine 141, cysteine 134–cysteine 154, cysteine 148–cysteine 163, cysteine 167–cysteine 179, cysteine 174–cysteine 192, cysteine 186–cysteine 201, cysteine 206–cysteine 221, cysteine 213–cysteine 234, cysteine 228–cysteine 245, cysteine 259–cysteine 272, cysteine 267–cysteine 285, cysteine 279–cysteine 294, cysteine 299–cysteine 311, cysteine 306–cysteine 324, cysteine 318–cysteine 333, cysteine 340–cysteine 351, cysteine 347–cysteine 360, cysteine 362–cysteine 374, cysteine 380–cysteine 390, cysteine 386–cysteine 399, and cysteine 401–cysteine 414. The Ca(2+) site is built by tryptophan 64, aspartate 67, aspartate 69, aspartate 71, aspartate 77, and glutamate 78. The N-linked (GlcNAc...) asparagine glycan is linked to asparagine 176. One can recognise an EGF-like 1 domain in the interval 336–375; that stretch reads GLNECLHNNGGCSHICTDLKIGFECTCPAGFQLLDQKTCG. One can recognise an EGF-like 2; calcium-binding domain in the interval 376-415; sequence DIDECKDPDACSQICVNYKGYFKCECYPGYEMDLLTKNCK. N-linked (GlcNAc...) asparagine glycosylation occurs at asparagine 441. LDL-receptor class B repeat units follow at residues 462 to 508, 509 to 551, 552 to 595, 596 to 639, and 640 to 681; these read NRIY…DWVH, KHIY…DPLR, GFMY…DLLS, QRLY…VFED, and KVFW…FHEL. Asparagine 518 and asparagine 538 each carry an N-linked (GlcNAc...) asparagine glycan. Positions 740–798 are clustered O-linked oligosaccharides; the sequence is STSTTTLASTMTRTVPATTRAPGTTVHRSTYQNHSTETPSLTAAVPSSVSVPRAPSISP. The disordered stretch occupies residues 754-815; it reads VPATTRAPGT…SNHSQHYANE (62 aa). The span at 765-777 shows a compositional bias: polar residues; it reads VHRSTYQNHSTET. A glycan (N-linked (GlcNAc...) asparagine) is linked at asparagine 772. Positions 778–799 are enriched in low complexity; that stretch reads PSLTAAVPSSVSVPRAPSISPS. Residues 800–812 show a composition bias toward polar residues; the sequence is TLSPATSNHSQHY. Asparagine 807 is a glycosylation site (N-linked (GlcNAc...) asparagine). A helical membrane pass occupies residues 827 to 847; that stretch reads VIGIIVPIVVIALLCMSGYLI. Residues 848–963 lie on the Cytoplasmic side of the membrane; the sequence is WRNWKRKNTK…ALSLEDDGLP (116 aa).

It belongs to the LDLR family. As to quaternary structure, homooligomer. Interacts with VLDLR. Reelin associates with two or more receptor molecules. Interacts with DAB1 and JNK-interacting proteins. Interacts with SNX17. Interacts with PCSK9. Interacts with MDK; this interaction is calcium dependent. Interacts with CLU. In terms of assembly, (Microbial infection) Interacts with Semliki Forest virus E2-E1 heterodimer; this interaction mediates viral entry to host cell. (Microbial infection) Interacts (via class A repeats) with Eastern equine encephalitis virus spike glycoprotein E2; this interaction mediates viral entry into host cell. O-glycosylated. Some alternatively spliced isoforms lack the O-linked sugar domain. In terms of processing, undergoes sequential, furin and gamma-secretase dependent, proteolytic processing, resulting in the extracellular release of the entire ligand-binding domain as a soluble polypeptide and in the intracellular domain (ICD) release into the cytoplasm. The gamma-secretase-dependent proteolytical processing occurs after the bulk of the extracellular domain has been shed, in a furin-dependent manner, in alternatively spliced isoforms carrying the furin cleavage site. Hypoglycosylation (mainly hypo-O-glycosylation) leads to increased extracellular cleavage, which in turn results in accelerating release of the intracellular domain (ICD) by the gamma-secretase. The resulting receptor fragment is able to inhibit Reelin signaling and in particular the Reelin-induced DAB1 phosphorylation. Post-translationally, tyrosine phosphorylated upon apoE binding. Ubiquitinated by MYLIP leading to degradation. In terms of tissue distribution, expressed mainly in brain and placenta. Also expressed in platelets and megakaryocytic cells. Not expressed in the liver.

Its subcellular location is the cell membrane. The protein resides in the secreted. Cell surface receptor for Reelin (RELN) and apolipoprotein E (apoE)-containing ligands. LRP8 participates in transmitting the extracellular Reelin signal to intracellular signaling processes, by binding to DAB1 on its cytoplasmic tail. Reelin acts via both the VLDL receptor (VLDLR) and LRP8 to regulate DAB1 tyrosine phosphorylation and microtubule function in neurons. LRP8 has higher affinity for Reelin than VLDLR. LRP8 is thus a key component of the Reelin pathway which governs neuronal layering of the forebrain during embryonic brain development. Binds the endoplasmic reticulum resident receptor-associated protein (RAP). Binds dimers of beta 2-glycoprotein I and may be involved in the suppression of platelet aggregation in the vasculature. Highly expressed in the initial segment of the epididymis, where it affects the functional expression of clusterin and phospholipid hydroperoxide glutathione peroxidase (PHGPx), two proteins required for sperm maturation. May also function as an endocytic receptor. Not required for endocytic uptake of SEPP1 in the kidney which is mediated by LRP2. Together with its ligand, apolipoprotein E (apoE), may indirectly play a role in the suppression of the innate immune response by controlling the survival of myeloid-derived suppressor cells. In terms of biological role, (Microbial infection) Acts as a receptor for Semliki Forest virus. The polypeptide is Low-density lipoprotein receptor-related protein 8 (LRP8) (Homo sapiens (Human)).